A 253-amino-acid polypeptide reads, in one-letter code: uncharacterized protein (253 aa).

This is an uncharacterized protein from Bacillus subtilis (strain 168).